Consider the following 108-residue polypeptide: Nucleoid-associated protein BamMC406_1737 (108 aa).

A compositionally biased stretch (polar residues) spans A85–T95. The disordered stretch occupies residues A85–F108. Over residues P99 to F108 the composition is skewed to pro residues.

It belongs to the YbaB/EbfC family. Homodimer.

Its subcellular location is the cytoplasm. It localises to the nucleoid. In terms of biological role, binds to DNA and alters its conformation. May be involved in regulation of gene expression, nucleoid organization and DNA protection. The chain is Nucleoid-associated protein BamMC406_1737 from Burkholderia ambifaria (strain MC40-6).